The primary structure comprises 401 residues: Glycerol-1-phosphate dehydrogenase [NAD(P)+] (401 aa).

NAD(+) contacts are provided by residues Asp-57, 118–122 (GTIHD), and 140–143 (TAPS). Asp-145 serves as a coordination point for substrate. Ser-149 is an NAD(+) binding site. Position 192 (Asp-192) interacts with substrate. Ni(2+) is bound by residues Asp-192 and His-272. Residue His-276 coordinates substrate. His-292 serves as a coordination point for Ni(2+).

Belongs to the glycerol-1-phosphate dehydrogenase family. As to quaternary structure, homodimer. Ni(2+) is required as a cofactor.

The protein resides in the cytoplasm. The catalysed reaction is sn-glycerol 1-phosphate + NAD(+) = dihydroxyacetone phosphate + NADH + H(+). It carries out the reaction sn-glycerol 1-phosphate + NADP(+) = dihydroxyacetone phosphate + NADPH + H(+). In terms of biological role, catalyzes the NAD(P)H-dependent reduction of dihydroxyacetonephosphate (DHAP or glycerone phosphate) to glycerol 1-phosphate (G1P). The G1P thus generated is probably used for the synthesis of phosphoglycerolipids in Gram-positive bacterial species. In Bacillus licheniformis (strain ATCC 14580 / DSM 13 / JCM 2505 / CCUG 7422 / NBRC 12200 / NCIMB 9375 / NCTC 10341 / NRRL NRS-1264 / Gibson 46), this protein is Glycerol-1-phosphate dehydrogenase [NAD(P)+].